A 269-amino-acid chain; its full sequence is Subtilisin Savinase (269 aa).

Gln2 serves as a coordination point for Ca(2+). The region spanning 5-268 is the Peptidase S8 domain; sequence PWGISRVQAP…SGLVNAEAAT (264 aa). The Charge relay system role is filled by Asp32. Asp40 serves as a coordination point for Ca(2+). Catalysis depends on His62, which acts as the Charge relay system. Residues Leu73, Asn75, Ile77, Val79, Ala163, Tyr165, and Ala168 each coordinate Ca(2+). Ser215 acts as the Charge relay system in catalysis.

Belongs to the peptidase S8 family. The cofactor is Ca(2+).

It localises to the secreted. The enzyme catalyses Hydrolysis of proteins with broad specificity for peptide bonds, and a preference for a large uncharged residue in P1. Hydrolyzes peptide amides.. Its function is as follows. Subtilisin is an extracellular alkaline serine protease, it catalyzes the hydrolysis of proteins and peptide amides. This Lederbergia lenta (Bacillus lentus) protein is Subtilisin Savinase.